The following is a 412-amino-acid chain: UDP-galactose transporter homolog 1 (412 aa).

The helical transmembrane segment at Val3–Ala23 threads the bilayer. A disordered region spans residues Phe31–Gly51. The next 4 helical transmembrane spans lie at Leu58–Phe78, Leu139–Leu159, Tyr197–Ser217, and Gly222–Leu242. N-linked (GlcNAc...) asparagine glycosylation is present at Asn244. The next 4 membrane-spanning stretches (helical) occupy residues Met262 to Leu282, Ser325 to Phe345, Thr355 to Phe375, and Leu379 to Gly399.

It belongs to the nucleotide-sugar transporter family. SLC35B subfamily.

Its subcellular location is the endoplasmic reticulum membrane. Functionally, may be involved in specific transport of UDP-Gal from the cytosol to the Golgi lumen. Involved in the maintenance of optimal conditions for the folding of secretory pathway proteins in the endoplasmic reticulum. In Cryptococcus neoformans var. neoformans serotype D (strain JEC21 / ATCC MYA-565) (Filobasidiella neoformans), this protein is UDP-galactose transporter homolog 1 (HUT1-A).